Reading from the N-terminus, the 298-residue chain is ATP synthase gamma chain (298 aa).

It belongs to the ATPase gamma chain family. In terms of assembly, F-type ATPases have 2 components, CF(1) - the catalytic core - and CF(0) - the membrane proton channel. CF(1) has five subunits: alpha(3), beta(3), gamma(1), delta(1), epsilon(1). CF(0) has three main subunits: a, b and c.

The protein localises to the cell membrane. Its function is as follows. Produces ATP from ADP in the presence of a proton gradient across the membrane. The gamma chain is believed to be important in regulating ATPase activity and the flow of protons through the CF(0) complex. The polypeptide is ATP synthase gamma chain (Frankia casuarinae (strain DSM 45818 / CECT 9043 / HFP020203 / CcI3)).